Here is a 687-residue protein sequence, read N- to C-terminus: Follicle-stimulating hormone receptor (687 aa).

The signal sequence occupies residues M1 to G17. One can recognise an LRRNT domain in the interval C18 to R46. The Extracellular portion of the chain corresponds to C18–R358. A disulfide bridge links C23 with C32. 9 LRR repeats span residues L49–L72, K73–L97, H98–N118, L119–S143, L144–S169, F170–G192, T193–G216, A217–N240, and L241–E259. N191 and N199 each carry an N-linked (GlcNAc...) asparagine glycan. Disulfide bonds link C275/C338, C276/C292, C276/C348, and C292/C330. Residue N293 is glycosylated (N-linked (GlcNAc...) asparagine). Position 327 is a sulfotyrosine (Y327). Residues V359–L379 form a helical membrane-spanning segment. At I380 to R390 the chain is on the cytoplasmic side. A helical transmembrane segment spans residues F391 to V413. The Extracellular segment spans residues D414–D435. A disulfide bridge connects residues C434 and C509. The chain crosses the membrane as a helical span at residues A436–L457. Residues E458–H477 lie on the Cytoplasmic side of the membrane. The chain crosses the membrane as a helical span at residues A478–I500. At S501 to Q520 the chain is on the extracellular side. A helical transmembrane segment spans residues L521 to T542. At H543–R565 the chain is on the cytoplasmic side. The helical transmembrane segment at M566–L589 threads the bilayer. The Extracellular portion of the chain corresponds to K590–K600. A helical membrane pass occupies residues I601 to T622. The Cytoplasmic portion of the chain corresponds to K623 to N687.

It belongs to the G-protein coupled receptor 1 family. FSH/LSH/TSH subfamily. As to quaternary structure, homotrimer. Functions as a homotrimer binding the FSH hormone heterodimer composed of CGA and FSHB. Interacts with ARRB2. Interacts with APPL2; interaction is independent of follicle stimulating hormone stimulation. N-glycosylated; indirectly required for FSH-binding, possibly via a conformational change that allows high affinity binding of hormone. In terms of processing, sulfated.

Its subcellular location is the cell membrane. Its function is as follows. G protein-coupled receptor for follitropin, the follicle-stimulating hormone. Through cAMP production activates the downstream PI3K-AKT and ERK1/ERK2 signaling pathways. The sequence is that of Follicle-stimulating hormone receptor (FSHR) from Equus asinus (Donkey).